A 264-amino-acid chain; its full sequence is NAD-capped RNA hydrolase NudC (264 aa).

Zn(2+) is bound by residues cysteine 99 and cysteine 102. Residue glutamate 112 coordinates substrate. Residues cysteine 117 and cysteine 120 each contribute to the Zn(2+) site. Tyrosine 125 contributes to the substrate binding site. The Nudix hydrolase domain occupies 126–253 (PVICPSIIVA…TIARKLIHVT (128 aa)). A divalent metal cation-binding residues include alanine 162, glutamate 178, and glutamate 182. A Nudix box motif is present at residues 163-184 (GFVEVGETFEQAVQREVFEETG). 196 to 203 (QPWAFPNS) contacts substrate. An a divalent metal cation-binding site is contributed by glutamate 223. Alanine 246 is a binding site for substrate.

It belongs to the Nudix hydrolase family. NudC subfamily. Homodimer. It depends on Mg(2+) as a cofactor. Requires Mn(2+) as cofactor. Zn(2+) serves as cofactor.

It carries out the reaction a 5'-end NAD(+)-phospho-ribonucleoside in mRNA + H2O = a 5'-end phospho-adenosine-phospho-ribonucleoside in mRNA + beta-nicotinamide D-ribonucleotide + 2 H(+). The catalysed reaction is NAD(+) + H2O = beta-nicotinamide D-ribonucleotide + AMP + 2 H(+). It catalyses the reaction NADH + H2O = reduced beta-nicotinamide D-ribonucleotide + AMP + 2 H(+). Functionally, mRNA decapping enzyme that specifically removes the nicotinamide adenine dinucleotide (NAD) cap from a subset of mRNAs by hydrolyzing the diphosphate linkage to produce nicotinamide mononucleotide (NMN) and 5' monophosphate mRNA. The NAD-cap is present at the 5'-end of some mRNAs and stabilizes RNA against 5'-processing. Has preference for mRNAs with a 5'-end purine. Catalyzes the hydrolysis of a broad range of dinucleotide pyrophosphates. The protein is NAD-capped RNA hydrolase NudC of Haemophilus influenzae (strain ATCC 51907 / DSM 11121 / KW20 / Rd).